Here is a 379-residue protein sequence, read N- to C-terminus: Protein RecA (379 aa).

Positions 1-14 (MSNEIKSISSSNSS) are enriched in low complexity. The segment at 1–24 (MSNEIKSISSSNSSCPPNEARSGE) is disordered. 84 to 91 (GPESSGKT) is an ATP binding site.

This sequence belongs to the RecA family.

It is found in the cytoplasm. In terms of biological role, can catalyze the hydrolysis of ATP in the presence of single-stranded DNA, the ATP-dependent uptake of single-stranded DNA by duplex DNA, and the ATP-dependent hybridization of homologous single-stranded DNAs. It interacts with LexA causing its activation and leading to its autocatalytic cleavage. This is Protein RecA from Prochlorococcus marinus (strain SARG / CCMP1375 / SS120).